The sequence spans 265 residues: Phosphonoacetaldehyde hydrolase (265 aa).

The active-site Nucleophile is the Asp10. Mg(2+)-binding residues include Asp10 and Ala12. The active-site Schiff-base intermediate with substrate is the Lys51. Position 184 (Asp184) interacts with Mg(2+).

It belongs to the HAD-like hydrolase superfamily. PhnX family. In terms of assembly, homodimer. Mg(2+) serves as cofactor.

It carries out the reaction phosphonoacetaldehyde + H2O = acetaldehyde + phosphate + H(+). Involved in phosphonate degradation. This is Phosphonoacetaldehyde hydrolase from Latilactobacillus sakei subsp. sakei (strain 23K) (Lactobacillus sakei subsp. sakei).